The following is a 195-amino-acid chain: MPIGVPRVPFRTPGDRDASWVDILINRLYRERLLFLGQDVDSEISNQLISLMIYLSIEKENKDLYLFINSPGGWVIPGIALYDTMQFVQPDVQTVCLGLAASMGSFLLAGGTITKRLAFPHAMIHQPASSFYEAQAGEFILEAEELLKMRETITRVYVQRTGKSLWVISEDMERDVFMSAAEAQAHGIVDLVAVE.

The active-site Nucleophile is the Ser102. Residue His125 is part of the active site.

It belongs to the peptidase S14 family. Component of the chloroplastic Clp protease core complex.

It is found in the plastid. The protein localises to the chloroplast stroma. It carries out the reaction Hydrolysis of proteins to small peptides in the presence of ATP and magnesium. alpha-casein is the usual test substrate. In the absence of ATP, only oligopeptides shorter than five residues are hydrolyzed (such as succinyl-Leu-Tyr-|-NHMec, and Leu-Tyr-Leu-|-Tyr-Trp, in which cleavage of the -Tyr-|-Leu- and -Tyr-|-Trp bonds also occurs).. Cleaves peptides in various proteins in a process that requires ATP hydrolysis. Has a chymotrypsin-like activity. Plays a major role in the degradation of misfolded proteins. This is ATP-dependent Clp protease proteolytic subunit from Phaseolus vulgaris (Kidney bean).